A 341-amino-acid chain; its full sequence is GDT1-like protein 1, chloroplastic (341 aa).

Over residues 1–13 (MASVASSTVFASS) the composition is skewed to low complexity. 2 disordered regions span residues 1–41 (MASV…GRSV) and 54–76 (VVTRASDEEGPPEPAGQGRGGGR). The N-terminal 57 residues, 1 to 57 (MASVASSTVFASSLPHHRATTRAPPTPPRIPRRARLPGRSVVSCLPKRGSEKLVVTR), are a transit peptide targeting the chloroplast. A run of 7 helical transmembrane segments spans residues 79-99 (PSLDASSCGLALAAAAGVLML), 117-137 (VVGDLGDISTGFASAFLLIFF), 158-178 (AIIFLGTFGALAVMTIISVVL), 203-223 (FLAACLLVYYGITTLLDAASG), 246-266 (GAGIISAASTIASTFVLVFIA), 286-306 (LGVIAGSLAGHAVATLIAVLG), and 318-338 (IVAYIGGSLFLAFAAVTLVEI).

It belongs to the GDT1 family.

It localises to the plastid. The protein resides in the chloroplast membrane. In Oryza sativa subsp. japonica (Rice), this protein is GDT1-like protein 1, chloroplastic.